Consider the following 314-residue polypeptide: Ribose-phosphate pyrophosphokinase (314 aa).

ATP-binding positions include D37–E39 and R96–Q97. Residues H131 and D170 each coordinate Mg(2+). K194 is an active-site residue. Residues R196, D220, and D224 to T228 contribute to the D-ribose 5-phosphate site.

The protein belongs to the ribose-phosphate pyrophosphokinase family. Class I subfamily. Homohexamer. It depends on Mg(2+) as a cofactor.

The protein resides in the cytoplasm. It catalyses the reaction D-ribose 5-phosphate + ATP = 5-phospho-alpha-D-ribose 1-diphosphate + AMP + H(+). It functions in the pathway metabolic intermediate biosynthesis; 5-phospho-alpha-D-ribose 1-diphosphate biosynthesis; 5-phospho-alpha-D-ribose 1-diphosphate from D-ribose 5-phosphate (route I): step 1/1. Its function is as follows. Involved in the biosynthesis of the central metabolite phospho-alpha-D-ribosyl-1-pyrophosphate (PRPP) via the transfer of pyrophosphoryl group from ATP to 1-hydroxyl of ribose-5-phosphate (Rib-5-P). In Vibrio vulnificus (strain CMCP6), this protein is Ribose-phosphate pyrophosphokinase.